A 477-amino-acid polypeptide reads, in one-letter code: Proline--tRNA ligase (477 aa).

It belongs to the class-II aminoacyl-tRNA synthetase family. ProS type 3 subfamily. In terms of assembly, homodimer.

It is found in the cytoplasm. The enzyme catalyses tRNA(Pro) + L-proline + ATP = L-prolyl-tRNA(Pro) + AMP + diphosphate. Functionally, catalyzes the attachment of proline to tRNA(Pro) in a two-step reaction: proline is first activated by ATP to form Pro-AMP and then transferred to the acceptor end of tRNA(Pro). In Lachnoclostridium phytofermentans (strain ATCC 700394 / DSM 18823 / ISDg) (Clostridium phytofermentans), this protein is Proline--tRNA ligase.